The sequence spans 114 residues: UPF0342 protein LVIS_1488 (114 aa).

This sequence belongs to the UPF0342 family.

The protein is UPF0342 protein LVIS_1488 of Levilactobacillus brevis (strain ATCC 367 / BCRC 12310 / CIP 105137 / JCM 1170 / LMG 11437 / NCIMB 947 / NCTC 947) (Lactobacillus brevis).